A 231-amino-acid chain; its full sequence is Secreted LysM effector LysM13 (231 aa).

The first 19 residues, 1-19, serve as a signal peptide directing secretion; it reads MVFLSLKYALSGLAATAAA. N-linked (GlcNAc...) asparagine glycans are attached at residues asparagine 30, asparagine 34, asparagine 77, asparagine 100, asparagine 130, asparagine 201, and asparagine 226. Residues 38–82 enclose the LysM domain; the sequence is TTYTTTSEDTIFTVARKFDRGPCDIARYNRMIDAEHIFANFTLRI.

The protein belongs to the secreted LysM effector family.

It localises to the secreted. Its function is as follows. Secreted LysM effector that might have a role in sequestration of chitin oligosaccharides (breakdown products of fungal cell walls that are released during invasion and act as triggers of host immunity) to dampen host defense. The chain is Secreted LysM effector LysM13 from Penicillium expansum (Blue mold rot fungus).